The chain runs to 197 residues: Dephospho-CoA kinase (197 aa).

Residues 4-197 (LIGLTGGIAT…VLKWLKTITK (194 aa)) enclose the DPCK domain. ATP is bound at residue 12–17 (ATGKST).

Belongs to the CoaE family.

Its subcellular location is the cytoplasm. It catalyses the reaction 3'-dephospho-CoA + ATP = ADP + CoA + H(+). It functions in the pathway cofactor biosynthesis; coenzyme A biosynthesis; CoA from (R)-pantothenate: step 5/5. Its function is as follows. Catalyzes the phosphorylation of the 3'-hydroxyl group of dephosphocoenzyme A to form coenzyme A. This chain is Dephospho-CoA kinase, found in Lactiplantibacillus plantarum (strain ATCC BAA-793 / NCIMB 8826 / WCFS1) (Lactobacillus plantarum).